The chain runs to 390 residues: Chorismate synthase (390 aa).

2 residues coordinate NADP(+): arginine 48 and arginine 54. Residues 125-127 (RSS), 238-239 (NA), glycine 278, 293-297 (KPTSS), and arginine 319 each bind FMN. The segment at 360-390 (KVPGNIINPTNPVTTQPDVRRAEDPEPDENS) is disordered. Residues 366 to 376 (INPTNPVTTQP) are compositionally biased toward polar residues.

The protein belongs to the chorismate synthase family. Homotetramer. Requires FMNH2 as cofactor.

It catalyses the reaction 5-O-(1-carboxyvinyl)-3-phosphoshikimate = chorismate + phosphate. It participates in metabolic intermediate biosynthesis; chorismate biosynthesis; chorismate from D-erythrose 4-phosphate and phosphoenolpyruvate: step 7/7. In terms of biological role, catalyzes the anti-1,4-elimination of the C-3 phosphate and the C-6 proR hydrogen from 5-enolpyruvylshikimate-3-phosphate (EPSP) to yield chorismate, which is the branch point compound that serves as the starting substrate for the three terminal pathways of aromatic amino acid biosynthesis. This reaction introduces a second double bond into the aromatic ring system. The chain is Chorismate synthase from Nitrosomonas eutropha (strain DSM 101675 / C91 / Nm57).